We begin with the raw amino-acid sequence, 430 residues long: Adenylosuccinate synthetase (430 aa).

GTP contacts are provided by residues 12-18 (GDEGKGK) and 40-42 (GHT). The active-site Proton acceptor is Asp-13. 2 residues coordinate Mg(2+): Asp-13 and Gly-40. IMP-binding positions include 13–16 (DEGK), 38–41 (NAGH), Thr-130, Arg-144, Gln-224, and Thr-239. The active-site Proton donor is His-41. The disordered stretch occupies residues 277 to 297 (PFPTEQDNETGRKIGERGREF). Residues 285–296 (ETGRKIGERGRE) show a composition bias toward basic and acidic residues. 299-305 (TNTGRPR) is a substrate binding site. Arg-303 is a binding site for IMP. GTP is bound by residues Arg-305, 331 to 333 (KLD), and 413 to 415 (STS).

This sequence belongs to the adenylosuccinate synthetase family. Homodimer. Mg(2+) serves as cofactor.

The protein resides in the cytoplasm. The catalysed reaction is IMP + L-aspartate + GTP = N(6)-(1,2-dicarboxyethyl)-AMP + GDP + phosphate + 2 H(+). It participates in purine metabolism; AMP biosynthesis via de novo pathway; AMP from IMP: step 1/2. Plays an important role in the de novo pathway of purine nucleotide biosynthesis. Catalyzes the first committed step in the biosynthesis of AMP from IMP. This chain is Adenylosuccinate synthetase, found in Bradyrhizobium sp. (strain ORS 278).